A 308-amino-acid polypeptide reads, in one-letter code: UPF0026 protein jhp_0109 (308 aa).

The 230-residue stretch at 18–247 (FGKSLGVDLS…VSLPKRSTAQ (230 aa)) folds into the Radical SAM core domain. [4Fe-4S] cluster-binding residues include Cys33, Cys37, and Cys40.

This sequence belongs to the UPF0026 family. The cofactor is [4Fe-4S] cluster.

This chain is UPF0026 protein jhp_0109, found in Helicobacter pylori (strain J99 / ATCC 700824) (Campylobacter pylori J99).